A 391-amino-acid polypeptide reads, in one-letter code: MAKSKFERTKLHVNIGTIGHVDHGKTSLTAAITKYFGEFKAYDQIDAAPEERARGITISTAHVEYETDQRHYAHVDCPGHADYVKNMITGAAQMDGAILVVSAADGPMPQTREHILLARQVGVPAIVVFLNKVDQVDDAELLELVELEVRELLSKYDFPGDDIPIVKGSALAALEDSDKSIGEDAVRLLMSEVDRYIPTPERPVDQSFLMPIEDVFSISGRGTVVTGRVERGVVKVGEEIEIVGIRPTSKTTVTGVEMFRKLLDQGQAGDNIGALLRGIDREGIERGQVLAKPGSVTPHTKFKAEAYILTKDEGGRHTPFFTNYRPQFYFRTTDVTGIVTLPEGTEMVMPGDNVAMDVSLIVPIAMEEKLRFAIREGGRTVGAGIVSKIIE.

The region spanning 10-201 is the tr-type G domain; it reads KLHVNIGTIG…EVDRYIPTPE (192 aa). Residues 19 to 26 are G1; it reads GHVDHGKT. 19–26 serves as a coordination point for GTP; that stretch reads GHVDHGKT. A Mg(2+)-binding site is contributed by threonine 26. The tract at residues 55–59 is G2; it reads GITIS. Residues 76 to 79 are G3; that stretch reads DCPG. GTP-binding positions include 76–80 and 131–134; these read DCPGH and NKVD. The G4 stretch occupies residues 131–134; it reads NKVD. The G5 stretch occupies residues 169–171; the sequence is SAL.

Belongs to the TRAFAC class translation factor GTPase superfamily. Classic translation factor GTPase family. EF-Tu/EF-1A subfamily. In terms of assembly, monomer.

The protein localises to the cytoplasm. The catalysed reaction is GTP + H2O = GDP + phosphate + H(+). In terms of biological role, GTP hydrolase that promotes the GTP-dependent binding of aminoacyl-tRNA to the A-site of ribosomes during protein biosynthesis. The chain is Elongation factor Tu 1 from Bartonella bacilliformis (strain ATCC 35685 / KC583 / Herrer 020/F12,63).